Reading from the N-terminus, the 201-residue chain is Superoxide dismutase [Mn/Fe] (201 aa).

Residues His27, His81, Asp162, and His166 each coordinate Fe(3+). Mn(2+) contacts are provided by His27, His81, Asp162, and His166.

Belongs to the iron/manganese superoxide dismutase family. As to quaternary structure, homodimer. The cofactor is Mn(2+). Fe(3+) is required as a cofactor.

It carries out the reaction 2 superoxide + 2 H(+) = H2O2 + O2. Functionally, destroys superoxide anion radicals which are normally produced within the cells and which are toxic to biological systems. Catalyzes the dismutation of superoxide anion radicals into O2 and H2O2 by successive reduction and oxidation of the transition metal ion at the active site. The polypeptide is Superoxide dismutase [Mn/Fe] (sodA) (Staphylococcus carnosus).